The chain runs to 100 residues: UPF0213 protein YhbQ (100 aa).

The region spanning 2–77 (TPWFLYLIRT…KQLTKRQKER (76 aa)) is the GIY-YIG domain.

It belongs to the UPF0213 family.

The protein is UPF0213 protein YhbQ of Escherichia coli O139:H28 (strain E24377A / ETEC).